The following is a 274-amino-acid chain: DNA damage-inducible protein D (274 aa).

The sequence is that of DNA damage-inducible protein D (dinD) from Escherichia coli (strain K12).